The primary structure comprises 61 residues: Defensin-like peptide TXKs2 (61 aa).

The signal sequence occupies residues 1–19 (MTYAILIIVSLLLISDRIS). A propeptide spanning residues 20–22 (NVV) is cleaved from the precursor. Disulfide bonds link cysteine 26-cysteine 47, cysteine 33-cysteine 56, and cysteine 37-cysteine 58.

This sequence belongs to the invertebrate defensin family. Expressed by the venom gland.

Its subcellular location is the secreted. Functionally, antibacterial protein. This is Defensin-like peptide TXKs2 from Olivierus martensii (Manchurian scorpion).